The chain runs to 82 residues: Small ribosomal subunit protein bS18 (82 aa).

Belongs to the bacterial ribosomal protein bS18 family. As to quaternary structure, part of the 30S ribosomal subunit. Forms a tight heterodimer with protein bS6.

Its function is as follows. Binds as a heterodimer with protein bS6 to the central domain of the 16S rRNA, where it helps stabilize the platform of the 30S subunit. In Chlamydia felis (strain Fe/C-56) (Chlamydophila felis), this protein is Small ribosomal subunit protein bS18.